The following is a 258-amino-acid chain: Acyl-[acyl-carrier-protein]--UDP-N-acetylglucosamine O-acyltransferase (258 aa).

It belongs to the transferase hexapeptide repeat family. LpxA subfamily. Homotrimer.

It is found in the cytoplasm. The enzyme catalyses a (3R)-hydroxyacyl-[ACP] + UDP-N-acetyl-alpha-D-glucosamine = a UDP-3-O-[(3R)-3-hydroxyacyl]-N-acetyl-alpha-D-glucosamine + holo-[ACP]. Its pathway is glycolipid biosynthesis; lipid IV(A) biosynthesis; lipid IV(A) from (3R)-3-hydroxytetradecanoyl-[acyl-carrier-protein] and UDP-N-acetyl-alpha-D-glucosamine: step 1/6. In terms of biological role, involved in the biosynthesis of lipid A, a phosphorylated glycolipid that anchors the lipopolysaccharide to the outer membrane of the cell. The polypeptide is Acyl-[acyl-carrier-protein]--UDP-N-acetylglucosamine O-acyltransferase (Neisseria meningitidis serogroup C / serotype 2a (strain ATCC 700532 / DSM 15464 / FAM18)).